Here is a 661-residue protein sequence, read N- to C-terminus: Ubiquitin-associated and SH3 domain-containing protein A (661 aa).

A UBA domain is found at 15–60; it reads KLKSRSSPSLLEPLLAMGFPVHTALKALAATGRKTAEEALAWLHDH. Residues 276-341 form the SH3 domain; sequence VHYQTLRALF…PENYTDRASE (66 aa). Residues 395-661 are phosphatase-like; it reads RKSVLVVRHG…FNWRNWISGN (267 aa).

As to quaternary structure, homodimer or homooligomer. Interacts with CBL. Part of a complex containing CBL and activated EGFR. Interacts with ubiquitin and with mono-ubiquitinated proteins. Interacts with dynamin. As to expression, highest expression of UBASH3A in tissues belonging to the immune system, including spleen, peripheral blood leukocytes, thymus and bone marrow.

The protein resides in the cytoplasm. It localises to the nucleus. Functionally, interferes with CBL-mediated down-regulation and degradation of receptor-type tyrosine kinases. Promotes accumulation of activated target receptors, such as T-cell receptors, EGFR and PDGFRB, on the cell surface. Exhibits negligible protein tyrosine phosphatase activity at neutral pH. May act as a dominant-negative regulator of UBASH3B-dependent dephosphorylation. May inhibit dynamin-dependent endocytic pathways by functionally sequestering dynamin via its SH3 domain. This is Ubiquitin-associated and SH3 domain-containing protein A (UBASH3A) from Homo sapiens (Human).